Here is a 475-residue protein sequence, read N- to C-terminus: 3-isopropylmalate dehydratase large subunit (475 aa).

[4Fe-4S] cluster is bound by residues cysteine 353, cysteine 414, and cysteine 417.

The protein belongs to the aconitase/IPM isomerase family. LeuC type 1 subfamily. In terms of assembly, heterodimer of LeuC and LeuD. Requires [4Fe-4S] cluster as cofactor.

It carries out the reaction (2R,3S)-3-isopropylmalate = (2S)-2-isopropylmalate. The protein operates within amino-acid biosynthesis; L-leucine biosynthesis; L-leucine from 3-methyl-2-oxobutanoate: step 2/4. Functionally, catalyzes the isomerization between 2-isopropylmalate and 3-isopropylmalate, via the formation of 2-isopropylmaleate. This Stutzerimonas stutzeri (strain A1501) (Pseudomonas stutzeri) protein is 3-isopropylmalate dehydratase large subunit.